A 187-amino-acid polypeptide reads, in one-letter code: uncharacterized protein (187 aa).

The first 28 residues, 1–28, serve as a signal peptide directing secretion; the sequence is MRLHRTNNSRRCTILLILALKIFDFVDT. N-linked (GlcNAc...) asparagine glycans are attached at residues Asn58, Asn70, Asn156, and Asn168.

The protein resides in the secreted. This is an uncharacterized protein from Caenorhabditis elegans.